The sequence spans 310 residues: Olfactory receptor 2A12 (310 aa).

The Extracellular segment spans residues 1 to 24; the sequence is MESNQTWITEVILLGFQVDPALEL. The N-linked (GlcNAc...) asparagine glycan is linked to Asn-4. The helical transmembrane segment at 25-48 threads the bilayer; that stretch reads FLFGFFLLFYSLTLMGNGIILGLI. Residues 49–56 lie on the Cytoplasmic side of the membrane; that stretch reads YLDSRLHT. A helical membrane pass occupies residues 57 to 78; the sequence is PMYVFLSHLAIVDMSYASSTVP. At 79–99 the chain is on the extracellular side; sequence KMLANLVMHKKVISFAPCILQ. Cys-96 and Cys-188 form a disulfide bridge. Residues 100–119 form a helical membrane-spanning segment; that stretch reads TFLYLAFAITECLILVMMCY. At 120–138 the chain is on the cytoplasmic side; that stretch reads DRYVAICHPLQYTLIMNWR. The helical transmembrane segment at 139–157 threads the bilayer; that stretch reads VCTVLASTCWIFSFLLALV. Residues 158–194 lie on the Extracellular side of the membrane; sequence HITLILRLPFCGPQKINHFFCQIMSVFKLACADTRLN. The helical transmembrane segment at 195-218 threads the bilayer; the sequence is QVVLFAGSAFILVGPLCLVLVSYL. Residues 219-235 are Cytoplasmic-facing; that stretch reads HILVAILRIQSGEGRRK. The chain crosses the membrane as a helical span at residues 236-258; the sequence is AFSTCSSHLCVVGLFFGSAIVMY. Topologically, residues 259–271 are extracellular; the sequence is MAPKSSHSQERRK. A helical transmembrane segment spans residues 272-291; it reads ILSLFYSLFNPILNPLIYSL. Residues 292-310 are Cytoplasmic-facing; the sequence is RNAEVKGALKRVLWKQRSM.

It belongs to the G-protein coupled receptor 1 family.

It localises to the cell membrane. In terms of biological role, odorant receptor. The polypeptide is Olfactory receptor 2A12 (OR2A12) (Homo sapiens (Human)).